The chain runs to 61 residues: Small ribosomal subunit protein uS14 (61 aa).

Zn(2+)-binding residues include Cys-24, Cys-27, Cys-40, and Cys-43.

Belongs to the universal ribosomal protein uS14 family. Zinc-binding uS14 subfamily. In terms of assembly, part of the 30S ribosomal subunit. Contacts proteins S3 and S10. Zn(2+) serves as cofactor.

In terms of biological role, binds 16S rRNA, required for the assembly of 30S particles and may also be responsible for determining the conformation of the 16S rRNA at the A site. The chain is Small ribosomal subunit protein uS14 from Halothermothrix orenii (strain H 168 / OCM 544 / DSM 9562).